A 697-amino-acid polypeptide reads, in one-letter code: Elongation factor G (697 aa).

One can recognise a tr-type G domain in the interval 8–282 (ENTRNIGIMA…AIVDYMPSPV (275 aa)). Residues 17-24 (AHIDAGKT), 81-85 (DTPGH), and 135-138 (NKMD) each bind GTP.

This sequence belongs to the TRAFAC class translation factor GTPase superfamily. Classic translation factor GTPase family. EF-G/EF-2 subfamily.

It localises to the cytoplasm. Its function is as follows. Catalyzes the GTP-dependent ribosomal translocation step during translation elongation. During this step, the ribosome changes from the pre-translocational (PRE) to the post-translocational (POST) state as the newly formed A-site-bound peptidyl-tRNA and P-site-bound deacylated tRNA move to the P and E sites, respectively. Catalyzes the coordinated movement of the two tRNA molecules, the mRNA and conformational changes in the ribosome. This is Elongation factor G from Acetivibrio thermocellus (strain ATCC 27405 / DSM 1237 / JCM 9322 / NBRC 103400 / NCIMB 10682 / NRRL B-4536 / VPI 7372) (Clostridium thermocellum).